A 177-amino-acid chain; its full sequence is ATP synthase subunit delta (177 aa).

This sequence belongs to the ATPase delta chain family. In terms of assembly, F-type ATPases have 2 components, F(1) - the catalytic core - and F(0) - the membrane proton channel. F(1) has five subunits: alpha(3), beta(3), gamma(1), delta(1), epsilon(1). F(0) has three main subunits: a(1), b(2) and c(10-14). The alpha and beta chains form an alternating ring which encloses part of the gamma chain. F(1) is attached to F(0) by a central stalk formed by the gamma and epsilon chains, while a peripheral stalk is formed by the delta and b chains.

The protein resides in the cell inner membrane. F(1)F(0) ATP synthase produces ATP from ADP in the presence of a proton or sodium gradient. F-type ATPases consist of two structural domains, F(1) containing the extramembraneous catalytic core and F(0) containing the membrane proton channel, linked together by a central stalk and a peripheral stalk. During catalysis, ATP synthesis in the catalytic domain of F(1) is coupled via a rotary mechanism of the central stalk subunits to proton translocation. Functionally, this protein is part of the stalk that links CF(0) to CF(1). It either transmits conformational changes from CF(0) to CF(1) or is implicated in proton conduction. The chain is ATP synthase subunit delta from Serratia proteamaculans (strain 568).